The primary structure comprises 307 residues: tRNA dimethylallyltransferase (307 aa).

11–18 lines the ATP pocket; that stretch reads GPTGSGKT. Residue 13–18 coordinates substrate; sequence TGSGKT. An interaction with substrate tRNA region spans residues 36–39; that stretch reads DSVA.

It belongs to the IPP transferase family. In terms of assembly, monomer. The cofactor is Mg(2+).

The catalysed reaction is adenosine(37) in tRNA + dimethylallyl diphosphate = N(6)-dimethylallyladenosine(37) in tRNA + diphosphate. In terms of biological role, catalyzes the transfer of a dimethylallyl group onto the adenine at position 37 in tRNAs that read codons beginning with uridine, leading to the formation of N6-(dimethylallyl)adenosine (i(6)A). This Koribacter versatilis (strain Ellin345) protein is tRNA dimethylallyltransferase.